The chain runs to 241 residues: Pyridoxal phosphate phosphatase PHOSPHO2 (241 aa).

D8 acts as the Nucleophile in catalysis. D8 and D10 together coordinate Mg(2+). Residue D10 is the Proton donor of the active site. The substrate site is built by D19 and D99. Mg(2+) is bound at residue D179.

This sequence belongs to the HAD-like hydrolase superfamily. PHOSPHO family. Mg(2+) is required as a cofactor.

The enzyme catalyses pyridoxal 5'-phosphate + H2O = pyridoxal + phosphate. In terms of biological role, phosphatase that has high activity toward pyridoxal 5'-phosphate (PLP). Also active at much lower level toward pyrophosphate, phosphoethanolamine (PEA), phosphocholine (PCho), phospho-l-tyrosine, fructose-6-phosphate, p-nitrophenyl phosphate, and h-glycerophosphate. The chain is Pyridoxal phosphate phosphatase PHOSPHO2 (Phospho2) from Mus musculus (Mouse).